The following is a 386-amino-acid chain: uncharacterized protein (386 aa).

The F-box domain maps to 29 to 76 (KYWKFLNEDCKIEVLKYLDYCSRCQLSICSKSDHKLVSITPLYVYEIE).

This is an uncharacterized protein from Caenorhabditis elegans.